Reading from the N-terminus, the 101-residue chain is CLAVATA3/ESR (CLE)-related protein 18 (101 aa).

The first 25 residues, 1 to 25 (MHLLKGGVVLIITLILFLITSSIVA), serve as a signal peptide directing secretion. Residues 37–58 (RQIPTGPDPLHNPPQPSPKHHH) are disordered. Residues Pro40 and Pro43 each carry the hydroxyproline modification. Pro residues predominate over residues 42 to 53 (GPDPLHNPPQPS). Pro43 carries O-linked (Ara...) hydroxyproline glycosylation. Tyr76 carries the sulfotyrosine modification. Pro84 bears the Hydroxyproline mark.

Belongs to the CLV3/ESR signal peptide family. The tyrosine sulfation is critical for the function of the peptide. Post-translationally, the O-glycosylation (arabinosylation) of the hydroxyproline Pro-43 enhances binding affinity of the CLE18p peptide for its receptor. In terms of tissue distribution, expressed in roots, leaves, siliques and seedlings.

The protein resides in the secreted. It localises to the extracellular space. Functionally, root growth factor that regulates the pattern of root growth and lateral root development by modulating the length and the number of cortical cells in the root apical meristem (RAM), and the anticlinal asymmetric cell divisions in lateral root initiation cells. In terms of biological role, extracellular signal peptide that regulates cell fate. Represses root apical meristem maintenance. Root growth factor that regulates the pattern of root growth and lateral root development. Regulates the transition of protophloem cells from proliferation to differentiation, thus impinging on postembryonic growth capacity of the root meristem; this signaling pathway requires CRN and CLV2. This chain is CLAVATA3/ESR (CLE)-related protein 18, found in Arabidopsis thaliana (Mouse-ear cress).